A 210-amino-acid chain; its full sequence is MTLAKDIASHLLKIQAVYLKPEEPFTWASGIKSPIYTDNRVTLAYPETRTLIENGFVEAIKEAFPEVEVIAGTATAGIPHGAIIADKMDLPFAYIRSKPKDHGAGNQIEGRVAQGQKMVVVEDLISTGGSVLEAVAAAKREGADVLGVVAIFSYQLPKADKNFADAGVKLVTLSNYSELIHLAQEEGYITPEGLDLLKRFKEDQENWQEG.

Residues arginine 96, lysine 100, histidine 102, and glutamate 122–serine 130 each bind 5-phospho-alpha-D-ribose 1-diphosphate. Orotate is bound at residue serine 126.

It belongs to the purine/pyrimidine phosphoribosyltransferase family. PyrE subfamily. In terms of assembly, homodimer. It depends on Mg(2+) as a cofactor.

The enzyme catalyses orotidine 5'-phosphate + diphosphate = orotate + 5-phospho-alpha-D-ribose 1-diphosphate. It participates in pyrimidine metabolism; UMP biosynthesis via de novo pathway; UMP from orotate: step 1/2. In terms of biological role, catalyzes the transfer of a ribosyl phosphate group from 5-phosphoribose 1-diphosphate to orotate, leading to the formation of orotidine monophosphate (OMP). In Streptococcus pneumoniae serotype 4 (strain ATCC BAA-334 / TIGR4), this protein is Orotate phosphoribosyltransferase.